Here is a 408-residue protein sequence, read N- to C-terminus: Imidazolonepropionase (408 aa).

Residues histidine 73 and histidine 75 each contribute to the Fe(3+) site. Residues histidine 73 and histidine 75 each coordinate Zn(2+). The 4-imidazolone-5-propanoate site is built by arginine 82, tyrosine 145, and histidine 178. Tyrosine 145 lines the N-formimidoyl-L-glutamate pocket. Residue histidine 243 participates in Fe(3+) binding. Histidine 243 is a binding site for Zn(2+). Glutamine 246 serves as a coordination point for 4-imidazolone-5-propanoate. Aspartate 318 is a Fe(3+) binding site. Residue aspartate 318 coordinates Zn(2+). N-formimidoyl-L-glutamate is bound by residues asparagine 320 and glycine 322. Serine 323 is a binding site for 4-imidazolone-5-propanoate.

This sequence belongs to the metallo-dependent hydrolases superfamily. HutI family. Zn(2+) serves as cofactor. Fe(3+) is required as a cofactor.

It is found in the cytoplasm. It catalyses the reaction 4-imidazolone-5-propanoate + H2O = N-formimidoyl-L-glutamate. The protein operates within amino-acid degradation; L-histidine degradation into L-glutamate; N-formimidoyl-L-glutamate from L-histidine: step 3/3. In terms of biological role, catalyzes the hydrolytic cleavage of the carbon-nitrogen bond in imidazolone-5-propanoate to yield N-formimidoyl-L-glutamate. It is the third step in the universal histidine degradation pathway. The polypeptide is Imidazolonepropionase (Shewanella loihica (strain ATCC BAA-1088 / PV-4)).